The following is a 63-amino-acid chain: Large ribosomal subunit protein uL30 (63 aa).

It belongs to the universal ribosomal protein uL30 family. In terms of assembly, part of the 50S ribosomal subunit.

In Rickettsia canadensis (strain McKiel), this protein is Large ribosomal subunit protein uL30.